Consider the following 199-residue polypeptide: NAD(P)H dehydrogenase (quinone) (199 aa).

Residues 4-190 (MLVLYYSAYG…DGARFQGRRV (187 aa)) form the Flavodoxin-like domain. FMN is bound by residues 10–15 (SAYGYM) and 78–80 (TRY). Y12 lines the NAD(+) pocket. Position 98 (W98) interacts with substrate. Residues 113–119 (STATQHG) and H134 contribute to the FMN site. Residues 157–181 (GGAPYGMTTTADGDGSRQPSAQELD) form a disordered region. Polar residues predominate over residues 163-177 (MTTTADGDGSRQPSA).

Belongs to the WrbA family. It depends on FMN as a cofactor.

It carries out the reaction a quinone + NADH + H(+) = a quinol + NAD(+). The catalysed reaction is a quinone + NADPH + H(+) = a quinol + NADP(+). The sequence is that of NAD(P)H dehydrogenase (quinone) from Brucella melitensis biotype 2 (strain ATCC 23457).